The chain runs to 210 residues: 2-dehydro-3-deoxy-phosphogluconate aldolase (210 aa).

Residue E41 is the Proton acceptor of the active site. Residues R45, T69, and K129 each contribute to the pyruvate site. The active-site Schiff-base intermediate with substrate is the K129.

The protein belongs to the KHG/KDPG aldolase family. As to quaternary structure, homotrimer.

It is found in the cytoplasm. It catalyses the reaction 2-dehydro-3-deoxy-6-phospho-D-gluconate = D-glyceraldehyde 3-phosphate + pyruvate. Its pathway is carbohydrate acid metabolism; 2-dehydro-3-deoxy-D-gluconate degradation; D-glyceraldehyde 3-phosphate and pyruvate from 2-dehydro-3-deoxy-D-gluconate: step 2/2. Functionally, catalyzes the reversible, stereospecific retro-aldol cleavage of 2-keto-3-deoxy-6-phosphogluconate (KDPG) to pyruvate and D-glyceraldehyde-3-phosphate. This is 2-dehydro-3-deoxy-phosphogluconate aldolase (eda) from Treponema pallidum (strain Nichols).